A 488-amino-acid chain; its full sequence is MPKKISAMDIYKLLPKTNCKKCGYPSCMAFATKLLEKEATIDQCPILNTPKFEKNKKKIIELISPPVKEVWFGNEEKKAVMGGDEVMYRYQLSFFNPTPIGVDISDELSEEEIKNRAKEIENFVFERTGEKLKLDFIVIRNASGDVEKFKKAIEIVEKETKMPICIASLNPEVIKEALKVVKSKPMVYAATKETLNDFIKVIKEVKKDVVLVLSSNNVKDLKNMAAKCLANGIEDLVLEPHTYPENIAETLDLNVMIRRSAIEKEDKYLGFPILNLPINAYYYALKNECPISGFFEDKEVVAKMFEATIANTLMNRYADALIMHGMDIWELMPVLTLRQCIYTDPRKPQAVEPGLYPIGNPDENSPVILTTNFSLTFYTVTGDFEKDNVTCWLLVMDTGGKAVDVSVAGGQYNGENAKKLIEETGIADKVSHRIIILPALAASTRGDIEDKTGWTCVVGTRDSSQVGDFLRNNWDKILKEWKEKNQTA.

The 4Fe-4S domain occupies 1–61 (MPKKISAMDI…FEKNKKKIIE (61 aa)). Residues cysteine 19, cysteine 22, cysteine 27, and cysteine 44 each coordinate [4Fe-4S] cluster.

In terms of assembly, heterodimer of delta and gamma chains. The ACDS complex is made up of alpha, epsilon, beta, gamma and delta chains with a probable stoichiometry of (alpha(2)epsilon(2))(4)-beta(8)-(gamma(1)delta(1))(8). Corrinoid serves as cofactor. The cofactor is [4Fe-4S] cluster.

The enzyme catalyses 5,6,7,8-tetrahydrosarcinapterin + methyl-Co(III)-[corrinoid Fe-S protein] = 5-methyltetrahydrosarcinapterin + Co(I)-[corrinoid Fe-S protein] + H(+). In terms of biological role, part of a complex that catalyzes the reversible cleavage of acetyl-CoA, allowing autotrophic growth from CO(2). The sequence is that of Acetyl-CoA decarbonylase/synthase complex subunit gamma from Methanocaldococcus jannaschii (strain ATCC 43067 / DSM 2661 / JAL-1 / JCM 10045 / NBRC 100440) (Methanococcus jannaschii).